The chain runs to 188 residues: Putative 3-methyladenine DNA glycosylase (188 aa).

This sequence belongs to the DNA glycosylase MPG family.

This Ehrlichia ruminantium (Cowdria ruminantium) protein is Putative 3-methyladenine DNA glycosylase.